The sequence spans 546 residues: Chaperonin GroEL 1 (546 aa).

Residues 30-33, K51, 87-91, G415, 479-481, and D495 contribute to the ATP site; these read TLGP, DGTTT, and NAA. Positions 526-546 are disordered; it reads KEDAPMPGGMPGGMGGMGMDM. Positions 534–546 are enriched in gly residues; sequence GMPGGMGGMGMDM.

It belongs to the chaperonin (HSP60) family. As to quaternary structure, forms a cylinder of 14 subunits composed of two heptameric rings stacked back-to-back. Interacts with the co-chaperonin GroES.

The protein localises to the cytoplasm. It carries out the reaction ATP + H2O + a folded polypeptide = ADP + phosphate + an unfolded polypeptide.. Its function is as follows. Together with its co-chaperonin GroES, plays an essential role in assisting protein folding. The GroEL-GroES system forms a nano-cage that allows encapsulation of the non-native substrate proteins and provides a physical environment optimized to promote and accelerate protein folding. The polypeptide is Chaperonin GroEL 1 (Burkholderia pseudomallei (strain 1106a)).